Consider the following 468-residue polypeptide: Sorting and assembly machinery component 50 homolog B (468 aa).

Positions 1–25 (MGTVHARSLDPLPMNGPDFGSPDDA) are disordered. A POTRA domain is found at 44 to 124 (VVVQRVHFEG…LDVTFEVTEL (81 aa)).

It belongs to the SAM50/omp85 family. Associates with the mitochondrial contact site and cristae organizing system (MICOS) complex (also known as MINOS or MitOS complex).

The protein resides in the mitochondrion outer membrane. Functionally, may play a role in the maintenance of the structure of mitochondrial cristae. This Xenopus laevis (African clawed frog) protein is Sorting and assembly machinery component 50 homolog B (samm50-b).